The chain runs to 305 residues: Coiled-coil domain-containing protein 69 (305 aa).

G2 is lipidated: N-myristoyl glycine. Residues 13-41 (LRKKKRQKAHQEGLTSKELNDLNAKSQEP) form a disordered region. 2 coiled-coil regions span residues 42-167 (NELL…SVLS) and 216-278 (MERN…KEQN).

The protein belongs to the CCDC69 family.

It is found in the cytoplasm. It localises to the cytoskeleton. Its subcellular location is the spindle. The protein resides in the midbody. Functionally, may act as a scaffold to regulate the recruitment and assembly of spindle midzone components. This is Coiled-coil domain-containing protein 69 (ccdc69) from Xenopus tropicalis (Western clawed frog).